The following is a 416-amino-acid chain: Chaperone protein dnaJ A6 (416 aa).

Residues Lys12 to Gly73 enclose the J domain. A CR-type zinc finger spans residues Gly133–Lys217. Zn(2+) is bound by residues Cys146, Cys149, Cys162, Cys165, Cys189, Cys192, Cys205, and Cys208. 3 CXXCXGXG motif repeats span residues Cys146–Gly153, Cys162–Gly169, and Cys189–Gly196. The span at His380 to Ala399 shows a compositional bias: basic and acidic residues. Residues His380 to Gln416 are disordered.

It belongs to the DnaJ family. In terms of assembly, interacts with ZFP1.

It localises to the nucleus. Its subcellular location is the cytoplasm. In terms of biological role, involved in disease resistance. Acts as a negative regulator of innate immunity to the rice blast fungus (Magnaporthe oryzae). Acts as a negative regulator of the pathogen-associated molecular pattern (PAMP)-triggered immunity (PTI) response through the inhibition of reactive oxygen species (ROS) accumulation and expression of defense-related genes. May function via the ubiquitin-proteasome degradation pathway. The sequence is that of Chaperone protein dnaJ A6 from Oryza sativa subsp. japonica (Rice).